A 257-amino-acid chain; its full sequence is Snake venom serine proteinase 11 (257 aa).

A signal peptide spans 1-18 (MVLIRVLANLLILQLSYA). Residues 19 to 24 (QKSSEL) constitute a propeptide that is removed on maturation. Positions 25 to 248 (VVGGDECNIN…YTEWIQSIIT (224 aa)) constitute a Peptidase S1 domain. 6 cysteine pairs are disulfide-bonded: Cys31–Cys162, Cys49–Cys65, Cys97–Cys255, Cys141–Cys209, Cys173–Cys188, and Cys199–Cys224. Residues His64 and Asp109 each act as charge relay system in the active site. An N-linked (GlcNAc...) asparagine glycan is attached at Asn120. The active-site Charge relay system is Ser203.

Belongs to the peptidase S1 family. Snake venom subfamily. Monomer. As to expression, expressed by the venom gland.

It localises to the secreted. Functionally, snake venom serine protease that may act in the hemostasis system of the prey. This is Snake venom serine proteinase 11 from Crotalus adamanteus (Eastern diamondback rattlesnake).